Reading from the N-terminus, the 820-residue chain is Leucine--tRNA ligase (820 aa).

The 'HIGH' region signature appears at 40–51 (PYPSGAGLHVGH). Positions 601–605 (KMSKS) match the 'KMSKS' region motif. An ATP-binding site is contributed by Lys-604.

The protein belongs to the class-I aminoacyl-tRNA synthetase family.

The protein resides in the cytoplasm. It carries out the reaction tRNA(Leu) + L-leucine + ATP = L-leucyl-tRNA(Leu) + AMP + diphosphate. The polypeptide is Leucine--tRNA ligase (Chlamydia pneumoniae (Chlamydophila pneumoniae)).